The primary structure comprises 258 residues: Cholera enterotoxin subunit A (258 aa).

The N-terminal stretch at 1–18 (MVKIIFVFFIFLSSFSYA) is a signal peptide. Residues 25-28 (RADS) and 41-43 (MPR) contribute to the NAD(+) site. The active site involves Glu-130. Cys-205 and Cys-217 form a disulfide bridge.

It belongs to the enterotoxin A family. The holotoxin (choleragen) consists of a pentameric ring of B subunits whose central pore is occupied by the A subunit. The A subunit contains two chains, A1 and A2, linked by a disulfide bridge. Interaction with the host protein ARF6 causes a conformation change so that the enterotoxin subunit A1 can bind NAD and catalyze the ADP-ribosylation of the host Gs alpha.

Functionally, the A1 chain catalyzes the ADP-ribosylation of Gs alpha, a GTP-binding regulatory protein, to activate the adenylate cyclase. This leads to an overproduction of cAMP and eventually to a hypersecretion of chloride and bicarbonate followed by water, resulting in the characteristic cholera stool. The A2 chain tethers A1 to the pentameric ring. The protein is Cholera enterotoxin subunit A (ctxA) of Vibrio cholerae serotype O1 (strain ATCC 39315 / El Tor Inaba N16961).